The primary structure comprises 89 residues: UPF0473 protein Helmi_02360 (89 aa).

It belongs to the UPF0473 family.

The polypeptide is UPF0473 protein Helmi_02360 (Heliobacterium modesticaldum (strain ATCC 51547 / Ice1)).